Here is a 464-residue protein sequence, read N- to C-terminus: Asparagine--tRNA ligase (464 aa).

This sequence belongs to the class-II aminoacyl-tRNA synthetase family. As to quaternary structure, homodimer.

It localises to the cytoplasm. The enzyme catalyses tRNA(Asn) + L-asparagine + ATP = L-asparaginyl-tRNA(Asn) + AMP + diphosphate + H(+). The chain is Asparagine--tRNA ligase from Clostridium botulinum (strain Eklund 17B / Type B).